The sequence spans 259 residues: UPF0246 protein Avin_11220 (259 aa).

It belongs to the UPF0246 family.

In Azotobacter vinelandii (strain DJ / ATCC BAA-1303), this protein is UPF0246 protein Avin_11220.